Reading from the N-terminus, the 478-residue chain is PRAME family member 4 (478 aa).

An LRR 1; degenerate repeat occupies 99 to 126 (RWKLQVLDLQDVCENFWMVWSEAMAHGC). Residues 181-205 (HLCCKKLKILGMPFRNIRSILKMVN) form an LRR 2; degenerate repeat. The LRR 3; degenerate repeat unit spans residues 206–232 (LDCIQEVEVNCKWVLPILTQFTPYLGH). Residues 233-268 (MRNLQKLILSHMDVSRYVSPEQKKEIVTQFTTQFLK) form an LRR 4; degenerate repeat. LRR repeat units follow at residues 269 to 294 (LRCL…LSCL), 295 to 326 (KTSL…SQLK), 327 to 347 (TLDL…QILL), 351 to 378 (AATL…ALSR), and 379 to 403 (CFEL…LLSH).

This sequence belongs to the PRAME family.

The protein is PRAME family member 4 of Homo sapiens (Human).